The following is a 442-amino-acid chain: D-serine dehydratase (442 aa).

Residue Lys-118 is modified to N6-(pyridoxal phosphate)lysine.

The protein belongs to the serine/threonine dehydratase family. DsdA subfamily. In terms of assembly, monomer. Requires pyridoxal 5'-phosphate as cofactor.

It catalyses the reaction D-serine = pyruvate + NH4(+). The polypeptide is D-serine dehydratase (Escherichia fergusonii (strain ATCC 35469 / DSM 13698 / CCUG 18766 / IAM 14443 / JCM 21226 / LMG 7866 / NBRC 102419 / NCTC 12128 / CDC 0568-73)).